Consider the following 571-residue polypeptide: Urease subunit alpha (571 aa).

Ni(2+) is bound by residues H138, H140, and K221. K221 is modified (N6-carboxylysine). H223 lines the substrate pocket. Ni(2+) is bound by residues H250 and H276. The Proton donor role is filled by H324. D364 is a binding site for Ni(2+).

This sequence belongs to the metallo-dependent hydrolases superfamily. Urease alpha subunit family. Heterotrimer of UreA (gamma), UreB (beta) and UreC (alpha) subunits. Three heterotrimers associate to form the active enzyme. Requires Ni cation as cofactor. Post-translationally, carboxylation allows a single lysine to coordinate two nickel ions.

The protein localises to the cytoplasm. The enzyme catalyses urea + 2 H2O + H(+) = hydrogencarbonate + 2 NH4(+). The protein operates within nitrogen metabolism; urea degradation; CO(2) and NH(3) from urea (urease route): step 1/1. This chain is Urease subunit alpha, found in Staphylococcus aureus (strain JH9).